Consider the following 84-residue polypeptide: Toxin Tb1 (84 aa).

The first 20 residues, 1–20 (MKGMILFISCLLLIGIVVEC), serve as a signal peptide directing secretion. Residues 21–82 (KEGYLMDHEG…VWDRATNKCG (62 aa)) enclose the LCN-type CS-alpha/beta domain. 4 disulfide bridges follow: C31-C81, C35-C57, C43-C62, and C47-C64. Cysteine amide is present on C81.

This sequence belongs to the long (4 C-C) scorpion toxin superfamily. Sodium channel inhibitor family. Beta subfamily. In terms of tissue distribution, expressed by the venom gland.

It is found in the secreted. In terms of biological role, beta toxins bind voltage-independently at site-4 of sodium channels (Nav) and shift the voltage of activation toward more negative potentials thereby affecting sodium channel activation and promoting spontaneous and repetitive firing. Is lethal to mice. This chain is Toxin Tb1, found in Tityus bahiensis (Brazilian scorpion).